A 113-amino-acid chain; its full sequence is Large ribosomal subunit protein uL22 (113 aa).

This sequence belongs to the universal ribosomal protein uL22 family. Part of the 50S ribosomal subunit.

In terms of biological role, this protein binds specifically to 23S rRNA; its binding is stimulated by other ribosomal proteins, e.g. L4, L17, and L20. It is important during the early stages of 50S assembly. It makes multiple contacts with different domains of the 23S rRNA in the assembled 50S subunit and ribosome. The globular domain of the protein is located near the polypeptide exit tunnel on the outside of the subunit, while an extended beta-hairpin is found that lines the wall of the exit tunnel in the center of the 70S ribosome. This chain is Large ribosomal subunit protein uL22, found in Bacillus pumilus (strain SAFR-032).